A 339-amino-acid chain; its full sequence is Inositol 2-dehydrogenase 2 (339 aa).

This sequence belongs to the Gfo/Idh/MocA family. In terms of assembly, homotetramer.

It carries out the reaction myo-inositol + NAD(+) = scyllo-inosose + NADH + H(+). Functionally, involved in the oxidation of myo-inositol (MI) to 2-keto-myo-inositol (2KMI or 2-inosose). This Saccharopolyspora erythraea (strain ATCC 11635 / DSM 40517 / JCM 4748 / NBRC 13426 / NCIMB 8594 / NRRL 2338) protein is Inositol 2-dehydrogenase 2.